We begin with the raw amino-acid sequence, 401 residues long: Phosphoglycerate kinase (401 aa).

Substrate-binding positions include 20 to 22, R35, 58 to 61, R117, and R154; these read DFN and HLGR. ATP contacts are provided by residues K204, G298, E329, and 358 to 361; that span reads GGDS.

Belongs to the phosphoglycerate kinase family. In terms of assembly, monomer.

The protein localises to the cytoplasm. It catalyses the reaction (2R)-3-phosphoglycerate + ATP = (2R)-3-phospho-glyceroyl phosphate + ADP. It participates in carbohydrate degradation; glycolysis; pyruvate from D-glyceraldehyde 3-phosphate: step 2/5. The sequence is that of Phosphoglycerate kinase from Bifidobacterium longum (strain NCC 2705).